The sequence spans 426 residues: Antigen EM13 (426 aa).

Residues 1–240 (MIQERADIEK…TVAKVDADAD (240 aa)) enclose the F-BAR domain. Disordered stretches follow at residues 287 to 315 (LTSL…ISTS) and 350 to 369 (ISKE…FVDD). Polar residues predominate over residues 305 to 315 (TTDSGSNISTS). One can recognise an SH3 domain in the interval 371–426 (RPGVPIRALYDYVGVEADELSFNSGDLFEKLEDEDEQGWCKGRKDGRVGLYPRQLR).

The protein is Antigen EM13 (EM13) of Echinococcus multilocularis (Fox tapeworm).